We begin with the raw amino-acid sequence, 136 residues long: Protein PsiE (136 aa).

4 consecutive transmembrane segments (helical) span residues 15-35, 55-75, 82-102, and 108-128; these read ILQNVLNLGLLTLGLILVLFL, YELVEGLVIYFLYFEFIALIV, FHFPLRYFVYIGITAIVRLII, and PMDVLLYSAAILLLVITLWLC.

This sequence belongs to the PsiE family.

It is found in the cell inner membrane. The sequence is that of Protein PsiE from Salmonella arizonae (strain ATCC BAA-731 / CDC346-86 / RSK2980).